The primary structure comprises 123 residues: Ragulator complex protein LAMTOR3-A (123 aa).

The protein belongs to the LAMTOR3 family. Part of the Ragulator complex composed of lamtor1, lamtor2, lamtor3, lamtor4 and lamtor5. The Ragulator complex interacts with slc38a9; the probable amino acid sensor. Component of the lysosomal folliculin complex (LFC).

The protein localises to the late endosome membrane. As part of the Ragulator complex it is involved in amino acid sensing and activation of mTORC1, a signaling complex promoting cell growth in response to growth factors, energy levels, and amino acids. Activated by amino acids through a mechanism involving the lysosomal V-ATPase, the Ragulator plays a dual role for the small GTPases Rag (RagA/RRAGA, RagB/RRAGB, RagC/RRAGC and/or RagD/RRAGD): it (1) acts as a guanine nucleotide exchange factor (GEF), activating the small GTPases Rag and (2) mediates recruitment of Rag GTPases to the lysosome membrane. Activated Ragulator and Rag GTPases function as a scaffold recruiting mTORC1 to lysosomes where it is in turn activated. This chain is Ragulator complex protein LAMTOR3-A (lamtor3-a), found in Xenopus laevis (African clawed frog).